Consider the following 388-residue polypeptide: F-box/kelch-repeat protein At3g17530 (388 aa).

The F-box domain occupies 1–50 (MMISDLPHDLESEILSRVPAKSLAKWKTTCKRWYALFRDPSFVKKNFDKA). Kelch repeat units follow at residues 163 to 208 (CCYY…VSLK) and 336 to 383 (RIYI…AEEN).

The protein is F-box/kelch-repeat protein At3g17530 of Arabidopsis thaliana (Mouse-ear cress).